The chain runs to 1284 residues: Integrator complex subunit 6 (1284 aa).

The region spanning 3-134 is the VWFA domain; it reads IILFLVDTSS…PSVIIVITDG (132 aa). Disordered stretches follow at residues 653 to 824, 864 to 895, 1053 to 1086, and 1125 to 1180; these read DVAP…GMSN, ETGETEAVPGGASLPGASSANEPSSIGASPAV, TSSGSSVGAGASNSNLNGNGSTESGGGVSSDDHA, and NNSS…PGQS. Positions 690-721 are enriched in gly residues; it reads SPGGGSGPGMPGMPGMGGGMSGLMLGAGGSGG. Low complexity-rich tracts occupy residues 752 to 781 and 803 to 824; these read DSRSSSSGSESSTTGSAPGSPIPGATSSIS and NSNSSFVSSTSEASASDSGMSN. Over residues 879-890 the composition is skewed to polar residues; it reads GASSANEPSSIG. 2 stretches are compositionally biased toward low complexity: residues 1053-1074 and 1125-1141; these read TSSGSSVGAGASNSNLNGNGST and NNSSAAGAASGSTLSNN. Residues 1159–1171 show a composition bias toward polar residues; that stretch reads INSSCGSSPTHNN.

This sequence belongs to the Integrator subunit 6 family. In terms of assembly, belongs to the multiprotein complex Integrator, at least composed of IntS1, IntS2, IntS3, IntS4, omd/IntS5, IntS6, defl/IntS7, IntS8, IntS9, IntS10, IntS11, IntS12, asun/IntS13, IntS14 and IntS15. The core complex associates with protein phosphatase 2A subunits mts/PP2A and Pp2A-29B, to form the Integrator-PP2A (INTAC) complex.

It localises to the nucleus. In terms of biological role, component of the integrator complex, a multiprotein complex that terminates RNA polymerase II (Pol II) transcription in the promoter-proximal region of genes. The integrator complex provides a quality checkpoint during transcription elongation by driving premature transcription termination of transcripts that are unfavorably configured for transcriptional elongation: the complex terminates transcription by (1) catalyzing dephosphorylation of the C-terminal domain (CTD) of Pol II subunit Polr2A/Rbp1 and Spt5, and (2) degrading the exiting nascent RNA transcript via endonuclease activity. The integrator complex is also involved in the 3'-end processing of the U7 snRNA, and also the spliceosomal snRNAs U1, U2, U4 and U5. Within the integrator complex, IntS6 acts as a substrate adapter for protein phosphatase 2A (PP2A). In Drosophila melanogaster (Fruit fly), this protein is Integrator complex subunit 6.